The primary structure comprises 299 residues: Cysteine synthase B (299 aa).

N6-(pyridoxal phosphate)lysine is present on K40. Pyridoxal 5'-phosphate is bound by residues N70, 174–178, and S261; that span reads GTGGT.

Belongs to the cysteine synthase/cystathionine beta-synthase family. Requires pyridoxal 5'-phosphate as cofactor.

It catalyses the reaction O-acetyl-L-serine + hydrogen sulfide = L-cysteine + acetate. Its pathway is amino-acid biosynthesis; L-cysteine biosynthesis; L-cysteine from L-serine: step 2/2. The protein is Cysteine synthase B (cysM) of Campylobacter jejuni subsp. jejuni serotype O:2 (strain ATCC 700819 / NCTC 11168).